A 20-amino-acid chain; its full sequence is Cytochrome c oxidase subunit 7B-liver, mitochondrial (20 aa).

Belongs to the cytochrome c oxidase VIIb family. As to quaternary structure, component of the cytochrome c oxidase (complex IV, CIV), a multisubunit enzyme composed of 14 subunits. The complex is composed of a catalytic core of 3 subunits MT-CO1, MT-CO2 and MT-CO3, encoded in the mitochondrial DNA, and 11 supernumerary subunits COX4I, COX5A, COX5B, COX6A, COX6B, COX6C, COX7A, COX7B, COX7C, COX8 and NDUFA4, which are encoded in the nuclear genome. The complex exists as a monomer or a dimer and forms supercomplexes (SCs) in the inner mitochondrial membrane with NADH-ubiquinone oxidoreductase (complex I, CI) and ubiquinol-cytochrome c oxidoreductase (cytochrome b-c1 complex, complex III, CIII), resulting in different assemblies (supercomplex SCI(1)III(2)IV(1) and megacomplex MCI(2)III(2)IV(2)).

It is found in the mitochondrion inner membrane. The catalysed reaction is 4 Fe(II)-[cytochrome c] + O2 + 8 H(+)(in) = 4 Fe(III)-[cytochrome c] + 2 H2O + 4 H(+)(out). It participates in energy metabolism; oxidative phosphorylation. Component of the cytochrome c oxidase, the last enzyme in the mitochondrial electron transport chain which drives oxidative phosphorylation. The respiratory chain contains 3 multisubunit complexes succinate dehydrogenase (complex II, CII), ubiquinol-cytochrome c oxidoreductase (cytochrome b-c1 complex, complex III, CIII) and cytochrome c oxidase (complex IV, CIV), that cooperate to transfer electrons derived from NADH and succinate to molecular oxygen, creating an electrochemical gradient over the inner membrane that drives transmembrane transport and the ATP synthase. Cytochrome c oxidase is the component of the respiratory chain that catalyzes the reduction of oxygen to water. Electrons originating from reduced cytochrome c in the intermembrane space (IMS) are transferred via the dinuclear copper A center (CU(A)) of subunit 2 and heme A of subunit 1 to the active site in subunit 1, a binuclear center (BNC) formed by heme A3 and copper B (CU(B)). The BNC reduces molecular oxygen to 2 water molecules using 4 electrons from cytochrome c in the IMS and 4 protons from the mitochondrial matrix. This is Cytochrome c oxidase subunit 7B-liver, mitochondrial from Thunnus obesus (Bigeye tuna).